The primary structure comprises 194 residues: Potassium-transporting ATPase KdpC subunit (194 aa).

A helical membrane pass occupies residues 12 to 34; sequence LFLLLLTGGVYPLLTTALGQWWF.

The protein belongs to the KdpC family. In terms of assembly, the system is composed of three essential subunits: KdpA, KdpB and KdpC.

The protein localises to the cell inner membrane. Functionally, part of the high-affinity ATP-driven potassium transport (or Kdp) system, which catalyzes the hydrolysis of ATP coupled with the electrogenic transport of potassium into the cytoplasm. This subunit acts as a catalytic chaperone that increases the ATP-binding affinity of the ATP-hydrolyzing subunit KdpB by the formation of a transient KdpB/KdpC/ATP ternary complex. This chain is Potassium-transporting ATPase KdpC subunit, found in Salmonella choleraesuis (strain SC-B67).